A 101-amino-acid chain; its full sequence is Small ribosomal subunit protein uS10 (101 aa).

This sequence belongs to the universal ribosomal protein uS10 family. As to quaternary structure, part of the 30S ribosomal subunit.

Functionally, involved in the binding of tRNA to the ribosomes. In Porphyromonas gingivalis (strain ATCC 33277 / DSM 20709 / CIP 103683 / JCM 12257 / NCTC 11834 / 2561), this protein is Small ribosomal subunit protein uS10.